The chain runs to 177 residues: Protein LIGHT-DEPENDENT SHORT HYPOCOTYLS 10 (177 aa).

The segment covering 1–10 (MSSPRERGKS) has biased composition (basic and acidic residues). 2 disordered regions span residues 1–31 (MSSP…SQKR) and 144–177 (RGIP…FSFS). The ALOG domain maps to 25–152 (RYESQKRRDW…ARGIPYKKKK (128 aa)). The Nuclear localization signal motif lies at 150–154 (KKKKK). Residues 168–177 (SSSSSSFSFS) show a composition bias toward low complexity.

It belongs to the plant homeotic and developmental regulators ALOG protein family.

Its subcellular location is the nucleus. Its function is as follows. Probable transcription regulator that acts as a developmental regulator by promoting cell growth in response to light. This Arabidopsis thaliana (Mouse-ear cress) protein is Protein LIGHT-DEPENDENT SHORT HYPOCOTYLS 10 (LSH10).